Consider the following 69-residue polypeptide: Trypsin/subtilisin inhibitor (69 aa).

A disulfide bridge connects residues cysteine 4 and cysteine 49.

This sequence belongs to the protease inhibitor I13 (potato type I serine protease inhibitor) family.

In terms of biological role, inhibitor of trypsin, chymotrypsin, subtilisin, etc. The polypeptide is Trypsin/subtilisin inhibitor (Amaranthus caudatus (Love-lies-bleeding)).